The chain runs to 487 residues: 3-octaprenyl-4-hydroxybenzoate carboxy-lyase (487 aa).

Asn172 is a binding site for Mn(2+). Prenylated FMN is bound by residues 175-177, 189-191, and 194-195; these read IYR, RWL, and RG. Position 238 (Glu238) interacts with Mn(2+). Residue Asp287 is the Proton donor of the active site.

It belongs to the UbiD family. Homohexamer. Requires prenylated FMN as cofactor. Mn(2+) serves as cofactor.

The protein localises to the cell membrane. The catalysed reaction is a 4-hydroxy-3-(all-trans-polyprenyl)benzoate + H(+) = a 2-(all-trans-polyprenyl)phenol + CO2. It participates in cofactor biosynthesis; ubiquinone biosynthesis. Its function is as follows. Catalyzes the decarboxylation of 3-octaprenyl-4-hydroxy benzoate to 2-octaprenylphenol, an intermediate step in ubiquinone biosynthesis. The sequence is that of 3-octaprenyl-4-hydroxybenzoate carboxy-lyase from Nitrosomonas eutropha (strain DSM 101675 / C91 / Nm57).